We begin with the raw amino-acid sequence, 362 residues long: Heat-inducible transcription repressor HrcA (362 aa).

This sequence belongs to the HrcA family.

Negative regulator of class I heat shock genes (grpE-dnaK-dnaJ and groELS operons). Prevents heat-shock induction of these operons. The sequence is that of Heat-inducible transcription repressor HrcA from Bradyrhizobium sp. (strain BTAi1 / ATCC BAA-1182).